A 43-amino-acid polypeptide reads, in one-letter code: Protein PsbN (43 aa).

Residues 4–24 form a helical membrane-spanning segment; sequence ATIIVIFVSSLLLGITAYSIY.

Belongs to the PsbN family.

The protein resides in the plastid. It is found in the chloroplast thylakoid membrane. Its function is as follows. May play a role in photosystem I and II biogenesis. The sequence is that of Protein PsbN from Trieres chinensis (Marine centric diatom).